A 379-amino-acid polypeptide reads, in one-letter code: Alkanesulfonate monooxygenase (379 aa).

Belongs to the SsuD family.

The catalysed reaction is an alkanesulfonate + FMNH2 + O2 = an aldehyde + FMN + sulfite + H2O + 2 H(+). Functionally, catalyzes the desulfonation of aliphatic sulfonates. The protein is Alkanesulfonate monooxygenase of Pseudomonas savastanoi pv. phaseolicola (strain 1448A / Race 6) (Pseudomonas syringae pv. phaseolicola (strain 1448A / Race 6)).